Here is a 791-residue protein sequence, read N- to C-terminus: MDTGLKFLVSGGLATSSVIRKVSAVSSLDSSLPSSSILSAIHGSWTSAISHDCSKIAKVAAIVGIGYLGVRIGAAWCRRTPGITNSIITYGEEVVEQVKVDIDEDAEEESDIGEEIVVGTIGIGIHTNVNPEVRAKRRHRSRPFIKKIVNLTKNHFGGCPDSSKSNVMAVSKFVYEQCKQHNCLPHQTRLIMSIAVPLVLSPDMYDISSKALLNSEILTENRATLDRLKTLDGWLTHLVCHPLSAKAWRRAIDNLCGLPDWKAFKLVNXGCLEELAGFCTSVRRGTHPDMTEFPQDRPIKTRKLYCLGGVGTSVKFNVHNNSLANLRRGLVERVFFVENDKKELEPAPKPLSGAFDRLTWFRRKLHSIVGTHSSISPGQFLDFYTGRRRTIYEGAVKSLEGLSVQRRDAYLKTFVKAEKINTTKKPDPAPRVIQPRNVRYNVEVGRYLRRFEHYLYRGIDEIWNGPTIIKGYTVEQIGKIARDAWDSFVSPVAIGFDMKRFDQHVSSDALKWEHSVYLDAFCHDSYLAELLKWQLVNKGVGYASDGMIKYKVDGCRMSGDMNTAMGNCLIACAITHDFFRSRGIRARLMNNGDDCVVICEKECAAVVKADMVRHWRQFGFQCELECDAEIFEQIEFCQMRPVYDGEKYVMVRNPLVSLSKDSYSVGPWNGINHARKWVNAVGLCGLSLTGGIPVVQSYYNMMIRNTQSVNSSGILRDVSFASGFRELARLGNRKSGAISEDARFSFYLAFGITPDLQRAMESDYDAHTIEWGFVPQGNPRIQPISWTLNEL.

Residues Pro491–Val607 enclose the RdRp catalytic domain.

This sequence belongs to the tombusviridae RNA polymerase family.

It localises to the host mitochondrion. It carries out the reaction RNA(n) + a ribonucleoside 5'-triphosphate = RNA(n+1) + diphosphate. RNA-dependent RNA polymerase that plays an essential role in the virus replication. Functionally, induces the reorganization of host mitochondria and the formation of structures with numerous dilations surrounded by double membranes, which may provide a protected environment to viral replication. The protein is RNA-directed RNA polymerase of Melon necrotic spot virus (MNSV).